Consider the following 222-residue polypeptide: UPF0502 protein Lcho_2066 (222 aa).

This sequence belongs to the UPF0502 family.

The polypeptide is UPF0502 protein Lcho_2066 (Leptothrix cholodnii (strain ATCC 51168 / LMG 8142 / SP-6) (Leptothrix discophora (strain SP-6))).